The sequence spans 97 residues: Co-chaperonin GroES (97 aa).

Belongs to the GroES chaperonin family. In terms of assembly, heptamer of 7 subunits arranged in a ring. Interacts with the chaperonin GroEL.

The protein localises to the cytoplasm. Functionally, together with the chaperonin GroEL, plays an essential role in assisting protein folding. The GroEL-GroES system forms a nano-cage that allows encapsulation of the non-native substrate proteins and provides a physical environment optimized to promote and accelerate protein folding. GroES binds to the apical surface of the GroEL ring, thereby capping the opening of the GroEL channel. This Ectopseudomonas mendocina (strain ymp) (Pseudomonas mendocina) protein is Co-chaperonin GroES.